The chain runs to 195 residues: Myelin basic protein (195 aa).

Position 2 is an N-acetylalanine (A2). Phosphoserine occurs at positions 8 and 13. The residue at position 15 (Y15) is a Phosphotyrosine. At T18 the chain carries Phosphothreonine. S20 is subject to Phosphoserine. T21 bears the Phosphothreonine mark. Citrulline occurs at positions 26 and 32. Position 36 is a phosphothreonine (T36). At S41 the chain carries Phosphoserine. R44 and R50 each carry omega-N-methylarginine. The tract at residues 45-79 (FFSGDRGAPKRGSGKVPWLKQSRSPLPSHARSRPG) is disordered. S57 carries the post-translational modification Phosphoserine. At T92 the chain carries Phosphothreonine. Position 94 is a phosphotyrosine (Y94). S101 carries the phosphoserine modification. Phosphothreonine occurs at positions 104, 119, and 122. Residues 117-139 (IVTPRTPPPSQGKGRGLSLSRFS) form a disordered region. Q127 carries the post-translational modification Deamidated glutamine. Omega-N-methylarginine; alternate is present on R131. R131 is modified (symmetric dimethylarginine; alternate). The residue at position 139 (S139) is a Phosphoserine. Residue K146 is modified to N6-acetyllysine. R154 bears the Citrulline mark. Residue Q172 is modified to Deamidated glutamine. At R184 the chain carries Citrulline. Phosphoserine is present on S186. S190 carries the phosphoserine; by UHMK1 modification. Citrulline is present on R195.

It belongs to the myelin basic protein family. As to quaternary structure, homodimer. In terms of processing, as in other animals, several charge isomers may be produced as a result of optional post-translational modifications, such as phosphorylation of serine or threonine residues, deamidation of glutamine or asparagine residues, citrullination and methylation of arginine residues. Arg-131 was found to be 44% monomethylated and 11% symmetrically dimethylated. Post-translationally, phosphorylated by TAOK2, VRK2, MAPK11, MAPK12, MAPK14 and MINK1. In terms of processing, proteolytically cleaved in B cell lysosomes by cathepsin CTSG which degrades the major immunogenic MBP epitope and prevents the activation of MBP-specific autoreactive T cells. Found in both the central and the peripheral nervous system.

The protein localises to the myelin membrane. Its function is as follows. Is, with PLP, the most abundant protein component of the myelin membrane in the CNS. Has a role in both the formation and stabilization of this compact multilayer arrangement of bilayers. Each splice variant and charge isomer may have a specialized function in the assembly of an optimized, biochemically functional myelin membrane. The chain is Myelin basic protein (Mbp) from Rattus norvegicus (Rat).